Here is a 468-residue protein sequence, read N- to C-terminus: UDP-N-acetylmuramate--L-alanine ligase (468 aa).

Residue glycine 121–threonine 127 coordinates ATP.

This sequence belongs to the MurCDEF family.

It localises to the cytoplasm. The catalysed reaction is UDP-N-acetyl-alpha-D-muramate + L-alanine + ATP = UDP-N-acetyl-alpha-D-muramoyl-L-alanine + ADP + phosphate + H(+). The protein operates within cell wall biogenesis; peptidoglycan biosynthesis. Its function is as follows. Cell wall formation. The protein is UDP-N-acetylmuramate--L-alanine ligase of Borreliella burgdorferi (strain ATCC 35210 / DSM 4680 / CIP 102532 / B31) (Borrelia burgdorferi).